Reading from the N-terminus, the 1091-residue chain is TATA element modulatory factor (1091 aa).

Disordered regions lie at residues 42-86 (IPYG…KPVR) and 100-280 (FLSP…DAKS). Polar residues predominate over residues 57-81 (WDTSTWGLNSTSSEPQSPPTASQAI). Serine 73, serine 78, serine 112, and serine 136 each carry phosphoserine. Composition is skewed to low complexity over residues 111 to 122 (KSPVVSKPPSKS), 131 to 142 (SSLQESSSPGQS), and 194 to 211 (SENV…TTST). Serine 213 is modified (phosphoserine). Positions 217–234 (ETKDMALEPKEQKHEDRQ) are enriched in basic and acidic residues. 2 stretches are compositionally biased toward low complexity: residues 242–253 (VSSFSSGTSTTS) and 264–273 (ISESSASSRQ). A phosphoserine mark is found at serine 324, serine 326, serine 329, serine 334, serine 340, and serine 357. The interaction with Elongin BC complex stretch occupies residues 329-338 (SLDSRSVSEI). Residues 360–443 (TPKTKVVEST…NQPKAPPEKE (84 aa)) form a disordered region. Residues 368–379 (STEENAEEEEGN) show a composition bias toward acidic residues. Residues serine 411 and serine 540 each carry the phosphoserine modification. Coiled-coil stretches lie at residues 443-767 (EDVC…STAR) and 824-894 (IQMS…SQLE). Residues serine 923 and serine 926 each carry the phosphoserine modification. Threonine 927 is subject to Phosphothreonine. Residue serine 931 is modified to Phosphoserine. Residues 984 to 1090 (IENLQSQLKL…QIDELLRQRL (107 aa)) are a coiled coil.

In terms of assembly, component of the SNF/SWI transcription factor complexes. Interacts with RAB6A. Interacts with TCEB1. Interacts with STAT3 and FER. Interacts with TRNP1; may regulate TRNP1 proteasomal degradation. Phosphorylated by FER.

Its subcellular location is the cytoplasm. The protein localises to the nucleus. The protein resides in the golgi apparatus membrane. Potential coactivator of the androgen receptor. May play critical roles in two RAB6-dependent retrograde transport processes: one from endosomes to the Golgi and the other from the Golgi to the ER. Mediates STAT3 degradation. The sequence is that of TATA element modulatory factor (Tmf1) from Mus musculus (Mouse).